The sequence spans 499 residues: Calcium/calmodulin-dependent protein kinase type II subunit delta (499 aa).

At alanine 2 the chain carries N-acetylalanine. Positions 14 to 272 (YQLFEELGKG…ASEALKHPWI (259 aa)) constitute a Protein kinase domain. ATP is bound by residues 20 to 28 (LGKGAFSVV) and lysine 43. Aspartate 136 functions as the Proton acceptor in the catalytic mechanism. Residues 283–292 (HRQETVDCLK) form an autoinhibitory domain region. Threonine 287 is subject to Phosphothreonine; by autocatalysis. Positions 291–301 (LKKFNARRKLK) are calmodulin-binding. Residues threonine 306 and threonine 307 each carry the phosphothreonine; by autocatalysis modification. Serine 315 is modified (phosphoserine). Residue lysine 318 is modified to N6-acetyllysine. Residues serine 319 and serine 330 each carry the phosphoserine modification. Threonine 331 carries the phosphothreonine modification. Residue serine 333 is modified to Phosphoserine. Residues threonine 336 and threonine 337 each carry the phosphothreonine modification. Phosphoserine occurs at positions 404, 490, and 494.

Belongs to the protein kinase superfamily. CAMK Ser/Thr protein kinase family. CaMK subfamily. In terms of assembly, CAMK2 is composed of 4 different chains: alpha (CAMK2A), beta (CAMK2B), gamma (CAMK2G), and delta (CAMK2D). The different isoforms assemble into homo- or heteromultimeric holoenzymes composed of 12 subunits with two hexameric rings stacked one on top of the other. Interacts with RRAD and CACNB2. Autophosphorylation of Thr-287 following activation by Ca(2+)/calmodulin. Phosphorylation of Thr-287 locks the kinase into an activated state. Expressed in cardiac muscle and skeletal muscle. Isoform Delta 3, isoform Delta 2, isoform Delta 8 and isoform Delta 9 are expressed in cardiac muscle. Isoform Delta 11 is expressed in skeletal muscle.

It is found in the cell membrane. It localises to the sarcolemma. The protein localises to the sarcoplasmic reticulum membrane. It catalyses the reaction L-seryl-[protein] + ATP = O-phospho-L-seryl-[protein] + ADP + H(+). The catalysed reaction is L-threonyl-[protein] + ATP = O-phospho-L-threonyl-[protein] + ADP + H(+). Activated by Ca(2+)/calmodulin. Binding of calmodulin results in conformational change that relieves intrasteric autoinhibition and allows autophosphorylation of Thr-287 which turns the kinase in a constitutively active form and confers to the kinase a Ca(2+)-independent activity. In terms of biological role, calcium/calmodulin-dependent protein kinase involved in the regulation of Ca(2+) homeostatis and excitation-contraction coupling (ECC) in heart by targeting ion channels, transporters and accessory proteins involved in Ca(2+) influx into the myocyte, Ca(2+) release from the sarcoplasmic reticulum (SR), SR Ca(2+) uptake and Na(+) and K(+) channel transport. Targets also transcription factors and signaling molecules to regulate heart function. In its activated form, is involved in the pathogenesis of dilated cardiomyopathy and heart failure. Contributes to cardiac decompensation and heart failure by regulating SR Ca(2+) release via direct phosphorylation of RYR2 Ca(2+) channel on 'Ser-2808'. In the nucleus, phosphorylates the MEF2 repressor HDAC4, promoting its nuclear export and binding to 14-3-3 protein, and expression of MEF2 and genes involved in the hypertrophic program. Is essential for left ventricular remodeling responses to myocardial infarction. In pathological myocardial remodeling acts downstream of the beta adrenergic receptor signaling cascade to regulate key proteins involved in ECC. Regulates Ca(2+) influx to myocytes by binding and phosphorylating the L-type Ca(2+) channel subunit beta-2 CACNB2. In addition to Ca(2+) channels, can target and regulate the cardiac sarcolemmal Na(+) channel Nav1.5/SCN5A and the K+ channel Kv4.3/KCND3, which contribute to arrhythmogenesis in heart failure. Phosphorylates phospholamban (PLN/PLB), an endogenous inhibitor of SERCA2A/ATP2A2, contributing to the enhancement of SR Ca(2+) uptake that may be important in frequency-dependent acceleration of relaxation (FDAR) and maintenance of contractile function during acidosis. May participate in the modulation of skeletal muscle function in response to exercise, by regulating SR Ca(2+) transport through phosphorylation of PLN/PLB and triadin, a ryanodine receptor-coupling factor. In response to interferon-gamma (IFN-gamma) stimulation, catalyzes phosphorylation of STAT1, stimulating the JAK-STAT signaling pathway. In Homo sapiens (Human), this protein is Calcium/calmodulin-dependent protein kinase type II subunit delta (CAMK2D).